The chain runs to 656 residues: Protein teflon (656 aa).

The C2H2-type 1 zinc-finger motif lies at 33–56; the sequence is LYCHFCRDLFTQLPEFLRHLQSNH. Residues 80–131 are disordered; it reads DKAHEDAQSAGHNSSSGDSRSLMNSEDSRAIDGSEENSDNSPVKPEQIGKQN. Residues 89 to 104 are compositionally biased toward polar residues; sequence AGHNSSSGDSRSLMNS. C2H2-type zinc fingers lie at residues 606-628 and 632-655; these read YFCK…LISH and FQCT…RNAH.

It belongs to the Teflon family.

It is found in the nucleus. The protein localises to the chromosome. Its function is as follows. Specifically required in males for proper segregation of autosomal bivalents at meiosis I. Expression is required in the male germ line prior to spermatocyte stage S4. May have a role as a bridging molecule maintaining adhesion to hold autosome bivalents together via heterochromatic connections. The chain is Protein teflon from Drosophila sechellia (Fruit fly).